Consider the following 63-residue polypeptide: Cecropin-A (63 aa).

The N-terminal stretch at M1–A22 is a signal peptide. A propeptide spanning residues A23–P26 is cleaved from the precursor. L61 carries the leucine amide modification.

This sequence belongs to the cecropin family. As to expression, highest expression in fat body and hemocytes. Is also expressed in Malpighian tubules and to a much lesser extent in midgut. Not present in silk gland.

It is found in the secreted. In terms of biological role, cecropins have lytic and antibacterial activity against several Gram-positive and Gram-negative bacteria. This Bombyx mori (Silk moth) protein is Cecropin-A (CECA).